A 1091-amino-acid chain; its full sequence is LRR receptor-like serine/threonine-protein kinase RGI3 (1091 aa).

The signal sequence occupies residues 1–24 (MPPNIYRLSFFSSLLCFFFIPCFS). Residues 25–703 (LDQQGQALLS…TTRNSSVVRL (679 aa)) are Extracellular-facing. The stretch at 33-56 (LSWKSQLNISGDAFSSWHVADTSP) is one LRR 1 repeat. The N-linked (GlcNAc...) asparagine glycan is linked to Asn40. The cysteines at positions 57 and 64 are disulfide-linked. LRR repeat units follow at residues 67–91 (RGEVSEIQLKGMDLQGSLPVTSLRS), 92–115 (LKSLTSLTLSSLNLTGVIPKEIGD), 116–140 (FTELELLDLSDNSLSGDIPVEIFRL), 142–166 (KLKTLSLNTNNLEGHIPMEIGNLSG), 168–188 (VELMLFDNKLSGEIPRSIGEL), 190–213 (NLQVLRAGGNKNLRGELPWEIGNC), 214–237 (ENLVMLGLAETSLSGKLPASIGNL), 239–261 (RVQTIAIYTSLLSGPIPDEIGYC), 262–285 (TELQNLYLYQNSISGSIPTTIGGL), 287–309 (KLQSLLLWQNNLVGKIPTELGNC), 311–332 (ELWLIDFSENLLTGTIPRSFGK), 333–357 (LENLQELQLSVNQISGTIPEELTNC), 359–383 (KLTHLEIDNNLITGEIPSLMSNLRS), 385–405 (TMFFAWQNKLTGNIPQSLSQC), 406–429 (RELQAIDLSYNSLSGSIPKEIFGL), 431–453 (NLTKLLLLSNDLSGFIPPDIGNC), 454–477 (TNLYRLRLNGNRLAGSIPSEIGNL), 478–501 (KNLNFVDISENRLVGSIPPAISGC), 503–524 (SLEFLDLHTNSLSGSLLGTTLP), 525–548 (KSLKFIDFSDNALSSTLPPGIGLL), 549–572 (TELTKLNLAKNRLSGEIPREISTC), 574–596 (SLQLLNLGENDFSGEIPDELGQI), 598–620 (SLAISLNLSCNRFVGEIPSRFSD), 621–644 (LKNLGVLDVSHNQLTGNLNVLTDL), 645–668 (QNLVSLNISYNDFSGDLPNTPFFR), and 669–690 (RLPLSDLASNRGLYISNAISTR). A glycan (N-linked (GlcNAc...) asparagine) is linked at Asn104. Asn163 carries N-linked (GlcNAc...) asparagine glycosylation. 5 consecutive short sequence motifs (small peptide recognition) follow at residues 173-174 (FD), 195-198 (RAGG), 218-223 (MLGLAE), Tyr246, and 268-270 (YLY). 2 short sequence motifs (small peptide recognition) span residues 316 to 319 (DFSE) and 338 to 340 (ELQ). Residue Asn356 is glycosylated (N-linked (GlcNAc...) asparagine). 2 short sequence motifs (small peptide recognition) span residues 386 to 390 (MFFAW) and 412 to 415 (DLSY). The N-linked (GlcNAc...) asparagine glycan is linked to Asn431. A Small peptide recognition motif is present at residues 434–438 (KLLLL). N-linked (GlcNAc...) asparagine glycosylation occurs at Asn452. Positions 458-460 (RLR) match the Small peptide recognition motif. The N-linked (GlcNAc...) asparagine glycan is linked to Asn604. Asn651 is a glycosylation site (N-linked (GlcNAc...) asparagine). Asn697 carries an N-linked (GlcNAc...) asparagine glycan. The helical transmembrane segment at 704-724 (TILILVVVTAVLVLMAVYTLV) threads the bilayer. Residues 725-1091 (RARAAGKQLL…CSFAFSDDSV (367 aa)) lie on the Cytoplasmic side of the membrane. The Protein kinase domain maps to 760–1046 (LTSANVIGTG…MLTEIRHIDV (287 aa)). ATP-binding positions include 766-774 (IGTGSSGVV) and Lys788. A phosphotyrosine mark is found at Tyr831 and Tyr870. Catalysis depends on Asp883, which acts as the Proton acceptor. Tyr933 carries the post-translational modification Phosphotyrosine.

This sequence belongs to the protein kinase superfamily. Ser/Thr protein kinase family. Binds to RGF peptides such as RGF1, GLV5/CLEL1/RGF2, GLV7/CLEL3/RGF3, GLV3/RGF4, GLV10/CLEL7/RGF5 and RGF10/CLELN; these interactions trigger the formation of heterodimers with SERK1, SERK2 or BAK1/SERK3 via LRR regions. In terms of processing, phosphorylated and ubiquitinated upon interaction with RGF1, thus leading to activation a subsequent degradation. Autophosphorylated. Expressed in roots.

Its subcellular location is the cell membrane. The enzyme catalyses L-seryl-[protein] + ATP = O-phospho-L-seryl-[protein] + ADP + H(+). The catalysed reaction is L-threonyl-[protein] + ATP = O-phospho-L-threonyl-[protein] + ADP + H(+). Its function is as follows. Together with RGI1, RGI2, RGI4 and RGI5, acts as a receptor of RGF peptides (e.g. RGF1, GLV5/CLEL1/RGF2, GLV7/CLEL3/RGF3, GLV3/RGF4, GLV10/CLEL7/RGF5 and RGF10/CLELN), peptide hormones which maintain the postembryonic root stem cell niche by regulating the expression levels and patterns of the transcription factor PLETHORA (PLT, e.g. PLT1 and PLT2). Links RGF peptides signal with their downstream components. The protein is LRR receptor-like serine/threonine-protein kinase RGI3 of Arabidopsis thaliana (Mouse-ear cress).